The sequence spans 317 residues: Transaldolase (317 aa).

Catalysis depends on Lys-126, which acts as the Schiff-base intermediate with substrate.

This sequence belongs to the transaldolase family. Type 1 subfamily. As to quaternary structure, homodimer.

It localises to the cytoplasm. It catalyses the reaction D-sedoheptulose 7-phosphate + D-glyceraldehyde 3-phosphate = D-erythrose 4-phosphate + beta-D-fructose 6-phosphate. Its pathway is carbohydrate degradation; pentose phosphate pathway; D-glyceraldehyde 3-phosphate and beta-D-fructose 6-phosphate from D-ribose 5-phosphate and D-xylulose 5-phosphate (non-oxidative stage): step 2/3. Its function is as follows. Transaldolase is important for the balance of metabolites in the pentose-phosphate pathway. This is Transaldolase from Burkholderia vietnamiensis (strain G4 / LMG 22486) (Burkholderia cepacia (strain R1808)).